The chain runs to 187 residues: MCQWAATKGTRNHAYEREKLERAFAKILRHRDPSVPPRRSDPRPRKEVARQWRKPHIYSPADLRRMLDIARSYPSPRAALRQENMYTMLLLAYCAGLRRGELARLDLGDVNLGDGTITVRQTKFFKTRILPLPDSVVVSFGPISLHGVGSAHSRLLTPPCSGTNKAVPAPRQEGSPGCLQTSYVVPG.

The Tyr recombinase domain occupies Arg53 to Gly187. Residues Arg98 and Lys123 contribute to the active site.

It belongs to the 'phage' integrase family.

This is an uncharacterized protein from Sinorhizobium fredii (strain NBRC 101917 / NGR234).